We begin with the raw amino-acid sequence, 64 residues long: Bactridin-2 (64 aa).

The region spanning 1-63 (KDGYLVGNDG…TWNRATNRCG (63 aa)) is the LCN-type CS-alpha/beta domain. Cystine bridges form between cysteine 11–cysteine 62, cysteine 15–cysteine 37, cysteine 23–cysteine 43, and cysteine 27–cysteine 45.

The protein belongs to the long (4 C-C) scorpion toxin superfamily. Sodium channel inhibitor family. Beta subfamily. Expressed by the venom gland.

It is found in the secreted. In terms of biological role, shows antibacterial activity against both Gram-positive bacteria (B.subtilis, M.luteus, E.faecalis) and Gram-negative bacteria (P.aeruginosa, Y.enterocolitica, A.calcoaceticus). Modifies membrane sodium permeability on Y.enterocolitica. Is toxic to mice, but is not to crabs. Induces concentration dependent haemolysis in human erythrocytes. Acts by inhibiting the sodium (Nav) currents. The chain is Bactridin-2 from Tityus discrepans (Venezuelan scorpion).